The primary structure comprises 670 residues: DNA ligase (670 aa).

Residues 32 to 36 (DAEYD), 81 to 82 (SL), and E113 each bind NAD(+). The active-site N6-AMP-lysine intermediate is K115. Residues R136, E173, K290, and K314 each coordinate NAD(+). Zn(2+) contacts are provided by C408, C411, C426, and C432. In terms of domain architecture, BRCT spans 592 to 670 (EIDSPFAGKT…EAEMIRLLGE (79 aa)).

It belongs to the NAD-dependent DNA ligase family. LigA subfamily. The cofactor is Mg(2+). Mn(2+) is required as a cofactor.

The enzyme catalyses NAD(+) + (deoxyribonucleotide)n-3'-hydroxyl + 5'-phospho-(deoxyribonucleotide)m = (deoxyribonucleotide)n+m + AMP + beta-nicotinamide D-nucleotide.. DNA ligase that catalyzes the formation of phosphodiester linkages between 5'-phosphoryl and 3'-hydroxyl groups in double-stranded DNA using NAD as a coenzyme and as the energy source for the reaction. It is essential for DNA replication and repair of damaged DNA. This is DNA ligase from Yersinia pseudotuberculosis serotype O:1b (strain IP 31758).